Reading from the N-terminus, the 1488-residue chain is Chromosome partition protein MukB (1488 aa).

An ATP-binding site is contributed by 34 to 41; that stretch reads GGNGAGKS. 3 coiled-coil regions span residues 326 to 418, 444 to 472, and 509 to 602; these read LEAD…QYNQ, LDTFQAKEQEATEKLLSLEQKMSVAQTAH, and RHLA…QRAP. Positions 666-783 are flexible hinge; it reads PGGAEDQRLN…SLPIFGRAAR (118 aa). Coiled coils occupy residues 835–923, 977–1116, and 1209–1265; these read EAEI…AKLE, EMLS…AKAG, and VEAI…LQSV. Positions 1049 to 1074 are disordered; sequence ADSGAEERARQRRDELHAQLSNNRSR. Positions 1051-1065 are enriched in basic and acidic residues; the sequence is SGAEERARQRRDELH.

It belongs to the SMC family. MukB subfamily. In terms of assembly, homodimerization via its hinge domain. Binds to DNA via its C-terminal region. Interacts, and probably forms a ternary complex, with MukE and MukF via its C-terminal region. The complex formation is stimulated by calcium or magnesium. Interacts with tubulin-related protein FtsZ.

The protein resides in the cytoplasm. It is found in the nucleoid. Plays a central role in chromosome condensation, segregation and cell cycle progression. Functions as a homodimer, which is essential for chromosome partition. Involved in negative DNA supercoiling in vivo, and by this means organize and compact chromosomes. May achieve or facilitate chromosome segregation by condensation DNA from both sides of a centrally located replisome during cell division. This Salmonella enteritidis PT4 (strain P125109) protein is Chromosome partition protein MukB.